A 171-amino-acid chain; its full sequence is 3-hydroxydecanoyl-[acyl-carrier-protein] dehydratase (171 aa).

Residue H71 is part of the active site.

This sequence belongs to the thioester dehydratase family. FabA subfamily. Homodimer.

The protein resides in the cytoplasm. The catalysed reaction is a (3R)-hydroxyacyl-[ACP] = a (2E)-enoyl-[ACP] + H2O. The enzyme catalyses (3R)-hydroxydecanoyl-[ACP] = (2E)-decenoyl-[ACP] + H2O. It carries out the reaction (2E)-decenoyl-[ACP] = (3Z)-decenoyl-[ACP]. It participates in lipid metabolism; fatty acid biosynthesis. Functionally, necessary for the introduction of cis unsaturation into fatty acids. Catalyzes the dehydration of (3R)-3-hydroxydecanoyl-ACP to E-(2)-decenoyl-ACP and then its isomerization to Z-(3)-decenoyl-ACP. Can catalyze the dehydratase reaction for beta-hydroxyacyl-ACPs with saturated chain lengths up to 16:0, being most active on intermediate chain length. The chain is 3-hydroxydecanoyl-[acyl-carrier-protein] dehydratase from Rhizobium meliloti (strain 1021) (Ensifer meliloti).